Consider the following 124-residue polypeptide: Fluoride-specific ion channel FluC 2 (124 aa).

Transmembrane regions (helical) follow at residues 9–29, 34–54, 67–87, and 99–119; these read LGIFLAAMLGGLVRYLVSTWL, DFPWGTLFVNYLGIFCLIFLV, LILALGTGFCGGLTTFSSLML, and FSLVLYLLLSIGGGLLLAYFL. 2 residues coordinate Na(+): Gly77 and Thr80.

It belongs to the fluoride channel Fluc/FEX (TC 1.A.43) family.

Its subcellular location is the cell membrane. It carries out the reaction fluoride(in) = fluoride(out). With respect to regulation, na(+) is not transported, but it plays an essential structural role and its presence is essential for fluoride channel function. Functionally, fluoride-specific ion channel. Important for reducing fluoride concentration in the cell, thus reducing its toxicity. The sequence is that of Fluoride-specific ion channel FluC 2 from Streptococcus pneumoniae (strain ATCC BAA-255 / R6).